The sequence spans 264 residues: tRNA (guanine-N(1)-)-methyltransferase (264 aa).

S-adenosyl-L-methionine contacts are provided by residues G125 and 145-150; that span reads LGDFVL.

The protein belongs to the RNA methyltransferase TrmD family. Homodimer.

The protein localises to the cytoplasm. The enzyme catalyses guanosine(37) in tRNA + S-adenosyl-L-methionine = N(1)-methylguanosine(37) in tRNA + S-adenosyl-L-homocysteine + H(+). Specifically methylates guanosine-37 in various tRNAs. The chain is tRNA (guanine-N(1)-)-methyltransferase from Burkholderia vietnamiensis (strain G4 / LMG 22486) (Burkholderia cepacia (strain R1808)).